The primary structure comprises 773 residues: 4'-phosphopantetheine phosphatase (773 aa).

At Ala-2 the chain carries N-acetylalanine. The pantothenate kinase stretch occupies residues 2–402 (AECRASGGGS…APELCPTQRA (401 aa)). 2 residues coordinate acetyl-CoA: Ser-196 and Ser-199. Tyr-320 bears the 3'-nitrotyrosine mark. Positions 403-773 (RSGTFDLLEM…VIFKYEVPAE (371 aa)) are 4'-phosphopantetheine phosphatase. A Phosphoserine modification is found at Ser-404. Phosphothreonine is present on Thr-406. Positions 623, 624, and 659 each coordinate Mn(2+). The Subfamily II EGMGR motif signature appears at 724–728 (EGMGR).

This sequence in the N-terminal section; belongs to the type II pantothenate kinase family. The protein in the C-terminal section; belongs to the damage-control phosphatase family. Phosphopantetheine phosphatase (II) subfamily. As to quaternary structure, homodimer. Interacts with PKM. Mn(2+) is required as a cofactor. It depends on Ni(2+) as a cofactor.

The protein resides in the cytoplasm. It catalyses the reaction (R)-4'-phosphopantetheine + H2O = (R)-pantetheine + phosphate. It carries out the reaction (R)-4'-phosphopantetheine sulfonate + H2O = (R)-pantetheine sulfonate + phosphate. The enzyme catalyses (R)-4'-phospho-S-sulfopantetheine + H2O = (R)-S-sulfopantetheine + phosphate. Activity is strongly promoted by Co(2+), Ni(2+), Mg(2+) and Mn(2+). Activity is inhibited by EDTA. Its function is as follows. Phosphatase which shows a preference for 4'-phosphopantetheine and its oxidatively damaged forms (sulfonate or S-sulfonate), providing strong indirect evidence that the phosphatase activity pre-empts damage in the coenzyme A (CoA) pathway. Hydrolyzing excess 4'-phosphopantetheine could constitute a directed overflow mechanism to prevent its oxidation to the S-sulfonate, sulfonate, or other forms. Hydrolyzing 4'-phosphopantetheine sulfonate or S-sulfonate would forestall their conversion to inactive forms of CoA and acyl carrier protein. May play a role in the physiological regulation of CoA intracellular levels. In Rattus norvegicus (Rat), this protein is 4'-phosphopantetheine phosphatase.